Consider the following 354-residue polypeptide: Period circadian protein (354 aa).

PAS domains lie at 1 to 55 and 133 to 235; these read GIVM…VNGQ and FVMR…HIIE. Residues 318–354 are disordered; sequence IQDPDHSYYQRDSVMLGGISPHHDYNDSKSSTGTPLS. Positions 345–354 are enriched in polar residues; it reads SKSSTGTPLS.

Forms a heterodimer with timeless (TIM); the complex then translocates into the nucleus. In terms of processing, phosphorylated with a circadian rhythmicity.

The protein resides in the nucleus. Its function is as follows. Involved in the generation of biological rhythms. The biological cycle depends on the rhythmic formation and nuclear localization of the tim-per complex. Light induces the degradation of tim, which promotes elimination of per. Nuclear activity of the heterodimer coordinatively regulates per and tim transcription negative feedback loop. Behaves as a negative element in circadian transcriptional loop. Does not appear to bind DNA, suggesting indirect transcriptional inhibition. The sequence is that of Period circadian protein (per) from Manduca sexta (Tobacco hawkmoth).